We begin with the raw amino-acid sequence, 561 residues long: Asparagine synthetase [glutamine-hydrolyzing] (561 aa).

The active-site For GATase activity is the cysteine 2. Positions 2–191 (CGIWALFGSD…PGHYEVLDLK (190 aa)) constitute a Glutamine amidotransferase type-2 domain. Residues 49-53 (RLAVV), 75-77 (NGE), and aspartate 97 contribute to the L-glutamine site. An Asparagine synthetase domain is found at 213-536 (HALYDGVEKL…PGRADWLPHY (324 aa)). ATP-binding positions include leucine 256, isoleucine 288, and 363 to 364 (SG). An N6-acetyllysine modification is found at lysine 385. Threonine 545 carries the phosphothreonine modification.

It catalyses the reaction L-aspartate + L-glutamine + ATP + H2O = L-asparagine + L-glutamate + AMP + diphosphate + H(+). It functions in the pathway amino-acid biosynthesis; L-asparagine biosynthesis; L-asparagine from L-aspartate (L-Gln route): step 1/1. The polypeptide is Asparagine synthetase [glutamine-hydrolyzing] (ASNS) (Bos taurus (Bovine)).